Reading from the N-terminus, the 1124-residue chain is EGF and laminin G domain-containing protein (1124 aa).

Residues 1–1055 lie on the Extracellular side of the membrane; the sequence is RTFVKKYSAS…KLQAEDDDKT (1055 aa). Laminin G-like domains lie at 8 to 203 and 210 to 369; these read SASR…NQKC and PFTF…WSGC. 9 cysteine pairs are disulfide-bonded: Cys-167–Cys-203, Cys-342–Cys-369, Cys-375–Cys-386, Cys-380–Cys-395, Cys-397–Cys-412, Cys-761–Cys-788, Cys-792–Cys-803, Cys-797–Cys-812, and Cys-814–Cys-824. In terms of domain architecture, EGF-like 1 spans 371 to 413; it reads ITDFCIFSPCLHGGECTQTGKTFSCGCSGTGYDKGPNSLSVCQ. The region spanning 621–788 is the Laminin G-like 3 domain; that stretch reads NTATFVNEDG…GEAVFVKSGC (168 aa). Residues 789–825 enclose the EGF-like 2 domain; the sequence is GAACENNSCKNHAKCLDNYNVYFCDCSKTPYYGYFCH. The disordered stretch occupies residues 1011–1047; sequence RATCGPEPKVPEIPTPRPVGQRADVSTPQGITTNPKL. Residues 1034–1046 show a composition bias toward polar residues; it reads DVSTPQGITTNPK. Residues 1056–1076 traverse the membrane as a helical segment; it reads AIIVVVVLILVLLLVVLILVI. The Cytoplasmic segment spans residues 1077–1124; that stretch reads YWYWARHKGEYHTHEDDEELKATDPYIEPAAPRKLKGEEPEKKKEWYI. The disordered stretch occupies residues 1090-1124; the sequence is HEDDEELKATDPYIEPAAPRKLKGEEPEKKKEWYI. Residues 1111-1124 are compositionally biased toward basic and acidic residues; the sequence is LKGEEPEKKKEWYI.

Component of the acid-insoluble organic matrix of the aragonitic skeleton (at protein level).

It localises to the membrane. The chain is EGF and laminin G domain-containing protein from Acropora millepora (Staghorn coral).